The sequence spans 336 residues: Inositol 2-dehydrogenase (336 aa).

It belongs to the Gfo/Idh/MocA family. As to quaternary structure, homotetramer.

It carries out the reaction myo-inositol + NAD(+) = scyllo-inosose + NADH + H(+). Functionally, involved in the oxidation of myo-inositol (MI) to 2-keto-myo-inositol (2KMI or 2-inosose). The protein is Inositol 2-dehydrogenase of Pseudomonas syringae pv. syringae (strain B728a).